Consider the following 337-residue polypeptide: Basic membrane protein A1 (337 aa).

The N-terminal stretch at 1–17 (MNKLLLLILFECIIFLS) is a signal peptide. Residue Cys-18 is the site of N-palmitoyl cysteine attachment. Residue Cys-18 is the site of S-diacylglycerol cysteine attachment.

It belongs to the BMP lipoprotein family. In terms of assembly, monomer.

The protein localises to the cell inner membrane. Its function is as follows. Immunogenic protein. May be part of an ABC-type nucleoside uptake system involved in the purine salvage pathway. This Borrelia garinii subsp. bavariensis (strain ATCC BAA-2496 / DSM 23469 / PBi) (Borreliella bavariensis) protein is Basic membrane protein A1 (bmpA1).